Consider the following 1356-residue polypeptide: MGIEGETVVLKNMLIGVNLILLGSMLKPSECRLEVTTERVQRQTVEEEGGASSYNTSSKEQPMVFNHVYNINVPLESLCSSGLEASAEQDVSAEDDTLAEYTGQTSDHESQVTFTHKINLPKKACPCASSAQVLQELLSRIEMLEREVSVLRDQCNTNCCQESAATGQLDYVPHCSGHGNFSFESCGCICNEGWFGKNCSEPYCPLGCSSRGVCVDGQCICDSEYSGDDCSELRCPTDCSSRGLCVDGECVCEEPYTGEDCRELRCPGDCSGKGQCANGTCLCQEGYAGEDCSQRRCLNACSGRGHCQEGLCICEEGYQGPDCSAVTPPEDLRVAGISDRSIELEWDGPMAVTEYVISYQPSLGGLQLQQRVPGDWSGVTITELEPGLTYNISVYAVISNILSLPITAKVATHLSTPQGLQFKTITETTVEVQWEPFSFSFDGWEISFTPKNNEGGVIAQLPSDVTSFNQTGLKPGEEYIVNVVALKEQARGPPTSASVSTVIDGPTQILVRDVSDTVAFVEWTPPRAKVDFILLKYGLVGGEGGKTTFRLQPPLSQYSVQALRPGSRYEVSISAVRGTNESDASSTQFTTEIDAPKNLRVGSRTATSLDLEWDNSEAEAQEYKVVYSTLAGEQYHEVLVPKGIGPTTKTTLTDLVPGTEYGVGISAVMNSKQSIPATMNARTELDSPRDLMVTASSETSISLIWTKASGPIDHYRITFTPSSGISSEVTVPRDRTSYTLTDLEPGAEYIISITAERGRQQSLESTVDAFTGFRPISHLHFSHVTSSSVNITWSDPSPPADRLILNYSPRDEEEEMMEVLLDATKRHAVLMGLQPATEYIVNLVAVHGTVTSEPIVGSITTGIDPPKNITISNVTKDSLTVSWSPPVAPFDYYEYPIDHPSGRLDSSVVPNTVTEFTITRLYPASQYEISLNSVRGREESERICTLVHTAMDSPMDLIATNITPTEALLQWKAPMGEVENYVIVLTHFAMAGETILVDGVSEEFQLVDLLPRTHYTVTMYATSGPLVSGTIATNFSTLLDPPANLTASEVTRQSALISWQPPRAAIENYVLTYKSTDGSRKELIVDAEDTWIRLEGLSENTDYTVLLQAAQEATRSSLTSTIFTTGGRVFSHPQDCAQHLMNGDTLSGVYTIFLNGELSHKLQVYCDMTTDGGGWIVFQRRQNGQTDFFRKWADYRVGFGNLEDEFWLGLDNYHRITAQGRYELRVDMRDGQEAVFAYYDKFAVEDSRSLYKLRIGGYNGTAGDSLSYHQGRPFSTEDRDNDVAVTNCAMSYKGAWWYKNCHRTNLNGKYGESRHSQGINWYHWKGHEFSIPFVEMKMRPYIHRLTAGRKRRALKF.

Positions 1–31 are cleaved as a signal peptide; that stretch reads MGIEGETVVLKNMLIGVNLILLGSMLKPSEC. N-linked (GlcNAc...) asparagine glycosylation is present at Asn-55. The stretch at 127 to 157 forms a coiled coil; sequence CASSAQVLQELLSRIEMLEREVSVLRDQCNT. Ser-176 carries an O-linked (Xyl...) (chondroitin sulfate) serine glycan. N-linked (GlcNAc...) asparagine glycans are attached at residues Asn-180 and Asn-198. EGF-like domains are found at residues 188–199, 204–230, and 235–261; these read CICNEGWFGKNC, CPLG…GDDC, and CPTD…GEDC. A glycan (O-linked (Xyl...) (chondroitin sulfate) serine) is linked at Ser-271. Residue Asn-278 is glycosylated (N-linked (GlcNAc...) asparagine). EGF-like domains are found at residues 281 to 292 and 293 to 324; these read CLCQEGYAGEDC and SQRR…PDCS. Cystine bridges form between Cys-297–Cys-307 and Cys-314–Cys-323. Ser-302 is a glycosylation site (O-linked (Xyl...) (chondroitin sulfate) serine). 9 consecutive Fibronectin type-III domains span residues 328-419, 420-504, 505-596, 597-686, 687-776, 777-864, 865-953, 954-1040, and 1041-1129; these read PPED…TPQG, LQFK…TVID, GPTQ…IDAP, KNLR…TELD, SPRD…FRPI, SHLH…TGID, PPKN…AMDS, PMDL…TLLD, and PPAN…GGRV. Asn-391, Asn-469, and Asn-580 each carry an N-linked (GlcNAc...) asparagine glycan. The residue at position 723 (Ser-723) is a Phosphoserine. Residues Asn-790, Asn-868, Asn-873, Asn-1034, Asn-1044, and Asn-1259 are each glycosylated (N-linked (GlcNAc...) asparagine). Positions 1127–1342 constitute a Fibrinogen C-terminal domain; sequence GRVFSHPQDC…FVEMKMRPYI (216 aa).

This sequence belongs to the tenascin family. In terms of assembly, forms oligomers. Interacts with TNC and FN1. Interacts with BCAN and ACAN in a calcium -dependent manner. Interacts with CNTN1, SCN2B, PTPRZ1, and CSPG3. Post-translationally, contains N-linked oligosaccharides, O-linked sialylated structures. Contains O-linked chondroitin sulfate glycosaminoglycans. Contains N-linked oligosaccharides with a sulfated carbohydrate structure type GalNAc-4-SO4 or HNK-1 (SO4-3-GlcUABeta1,3GalBeta1,4GlcNAc). The levels of HNK-1 rise and fall in parallel to those of TNR during postnatal development of the cerebellum. In contrast, levels of GalNAc-4-SO4 are regulated independently from those of TNR, rising late in cerebellar development and continuing into adulthood. Early in postnatal development, GalNAc-4-SO4 is found predominantly on isoform 1, whereas in the adult it is predominantly on isoform 2. Brain-specific. Expressed in oligodendrocytes and small subsets of neurons (mainly interneurons and motoneurons) of the cerebellum, hippocampus and olfactory bulb. Expressed in dorsal root ganglia.

Its subcellular location is the secreted. The protein resides in the extracellular space. The protein localises to the extracellular matrix. In terms of biological role, neural extracellular matrix (ECM) protein involved in interactions with different cells and matrix components. Theses interactions can influence cellular behavior by either evoking a stable adhesion and differentiation, or repulsion and inhibition of neurite growth. Binding to cell surface gangliosides inhibits RGD-dependent integrin-mediated cell adhesion and results in an inhibition of PTK2/FAK1 (FAK) phosphorylation and cell detachment. Binding to membrane surface sulfatides results in a oligodendrocyte adhesion and differentiation. Interaction with CNTN1 induces a repulsion of neurons and an inhibition of neurite outgrowth. Interacts with SCN2B may play a crucial role in clustering and regulation of activity of sodium channels at nodes of Ranvier. TNR-linked chondroitin sulfate glycosaminoglycans are involved in the interaction with FN1 and mediates inhibition of cell adhesion and neurite outgrowth. The highly regulated addition of sulfated carbohydrate structure may modulate the adhesive properties of TNR over the course of development and during synapse maintenance. This chain is Tenascin-R (Tnr), found in Rattus norvegicus (Rat).